The primary structure comprises 180 residues: Decaprenylphosphoryl-5-phosphoribose phosphatase (180 aa).

The next 4 membrane-spanning stretches (helical) occupy residues 31 to 51, 61 to 81, 116 to 136, and 139 to 159; these read ALSH…AGAL, LAVG…KRVV, VLLA…PMAL, and LVLG…GALV.

The protein belongs to the PA-phosphatase related phosphoesterase family.

It localises to the cell membrane. It carries out the reaction trans,octa-cis-decaprenylphospho-beta-D-ribofuranose 5-phosphate + H2O = trans,octa-cis-decaprenylphospho-beta-D-ribofuranose + phosphate. It participates in cell wall biogenesis; cell wall polysaccharide biosynthesis. Functionally, phosphatase involved in the biosynthesis of decaprenylphosphoryl arabinose (DPA), which serves as the arabinose donor for the biosynthesis of arabinogalactan, the major mycobacterial cell wall polysaccharide. Catalyzes the dephosphorylation of decaprenylphosphoryl-5-phosphoribose (DPPR) to decaprenyl-phosphoribose (DPR). This Mycolicibacterium smegmatis (strain ATCC 700084 / mc(2)155) (Mycobacterium smegmatis) protein is Decaprenylphosphoryl-5-phosphoribose phosphatase.